The sequence spans 427 residues: Indole diterpene prenyltransferase ptmD (427 aa).

77–78 (YV) serves as a coordination point for L-tryptophan. Residues R99, K186, Y188, R259, K261, Y263, Y344, Y409, and Y413 each contribute to the substrate site.

It belongs to the tryptophan dimethylallyltransferase family.

The protein operates within secondary metabolite biosynthesis. Functionally, indole diterpene prenyltransferase; part of the gene cluster that mediates the biosynthesis of the indole diterpenes penitrems. The geranylgeranyl diphosphate (GGPP) synthase ptmG catalyzes the first step in penitrem biosynthesis via conversion of farnesyl pyrophosphate and isopentyl pyrophosphate into geranylgeranyl pyrophosphate (GGPP). Condensation of indole-3-glycerol phosphate with GGPP by the prenyl transferase ptmC then forms 3-geranylgeranylindole (3-GGI). Epoxidation by the FAD-dependent monooxygenase ptmM leads to a epoxidized-GGI that is substrate of the terpene cyclase ptmB for cyclization to yield paspaline. Paspaline is subsequently converted to 13-desoxypaxilline by the cytochrome P450 monooxygenase ptmP, the latter being then converted to paxilline by the cytochrome P450 monooxygenase ptmQ. Paxilline is converted to beta-paxitriol via C-10 ketoreduction by the short-chain dehydrogenase ptmH which can be monoprenylated at the C-20 by the indole diterpene prenyltransferase ptmD. A two-step elimination (acetylation and elimination) process performed by the O-acetyltransferase ptmV and ptmI leads to the production of the prenylated form of penijanthine. The FAD-linked oxidoreductase ptmO then converts the prenylated form of penijanthine into PC-M5 which is in turn transformed into PC-M4 by the aromatic dimethylallyltransferase ptmE. Five sequential oxidative transformations performed by the cytochrome P450 monooxygenases ptmK, ptmU, ptmL, ptmN and ptmJ yield the various penitrem compounds. PtmK, ptmU and ptmM are involved in the formation of the key bicyclic ring of penitrem C via the formation of the intermediates secopenitrem D and penitrem D. PtmL catalyzes the epoxidation of penitrem D and C to yield penitrem B and F, respectively. PtmJ catalyzes the last benzylic hydroxylation to convert penitrem B to prenitrem E and penitrem F to penitrem A. The sequence is that of Indole diterpene prenyltransferase ptmD from Penicillium ochrochloron.